The chain runs to 220 residues: uncharacterized protein (220 aa).

7 consecutive transmembrane segments (helical) span residues 25–45 (YFLL…SMSL), 50–70 (PGLI…YKLS), 74–94 (LGIL…GPIL), 105–125 (IVVL…AYVL), 135–155 (SGTI…SFFF), 158–178 (PMLY…GILY), and 196–216 (VSIF…FSIL).

The protein belongs to the BI1 family.

It localises to the cell membrane. This is an uncharacterized protein from Pasteurella multocida (strain Pm70).